A 1343-amino-acid polypeptide reads, in one-letter code: Kinesin-like protein KIF7 (1343 aa).

Positions 15 to 349 (PVRVALRVRP…LNYASRAQNI (335 aa)) constitute a Kinesin motor domain. 94–101 (GQTGSGKT) lines the ATP pocket. Disordered regions lie at residues 356-382 (NWRP…RSET), 451-483 (RSAL…RKED), and 611-639 (EVNR…TLHL). Residues 358–479 (RPEAERPPEE…EDQAAQGAGG (122 aa)) form an interaction with DLG5 region. The interaction with SMO stretch occupies residues 358–1206 (RPEAERPPEE…LGRYMWINQE (849 aa)). A coiled-coil region spans residues 480–542 (RKEDEGAQQL…ELRLRLELVR (63 aa)). A sufficient for interaction with NPHP1 region spans residues 513–775 (AMEQYKLQSD…LRELEGKELQ (263 aa)). Coiled coils occupy residues 698 to 1057 (ASEW…AAIE) and 1109 to 1211 (TLRE…KQKL). Serine 898 bears the Phosphoserine mark. Disordered stretches follow at residues 1219–1238 (HSRG…APGN) and 1310–1343 (GEAG…KNPL).

The protein belongs to the TRAFAC class myosin-kinesin ATPase superfamily. Kinesin family. KIF27 subfamily. Can form homodimers and interacts with microtubules. Interacts with GLI1, GLI2, GLI3, SMO and SUFU. Interacts with NPHP1. Interacts with SMO and DLG5 (via PDZ4 or guanylate kinase-like domain). Post-translationally, polyubiquitinated by UBR3. As to expression, embryonic stem cells, melanotic melanoma and Jurkat T-cells. Expressed in heart, lung, liver, kidney, testis, retina, placenta, pancreas, colon, small intestin, prostate and thymus.

It localises to the cell projection. It is found in the cilium. Its subcellular location is the cytoplasm. The protein localises to the cytoskeleton. The protein resides in the cilium basal body. Its function is as follows. Essential for hedgehog signaling regulation: acts both as a negative and positive regulator of sonic hedgehog (Shh) and Indian hedgehog (Ihh) pathways, acting downstream of SMO, through both SUFU-dependent and -independent mechanisms. Involved in the regulation of microtubular dynamics. Required for proper organization of the ciliary tip and control of ciliary localization of SUFU-GLI2 complexes. Required for localization of GLI3 to cilia in response to Shh. Negatively regulates Shh signaling by preventing inappropriate activation of the transcriptional activator GLI2 in the absence of ligand. Positively regulates Shh signaling by preventing the processing of the transcription factor GLI3 into its repressor form. In keratinocytes, promotes the dissociation of SUFU-GLI2 complexes, GLI2 nuclear translocation and Shh signaling activation. Involved in the regulation of epidermal differentiation and chondrocyte development. This is Kinesin-like protein KIF7 (KIF7) from Homo sapiens (Human).